Consider the following 267-residue polypeptide: 4-hydroxy-tetrahydrodipicolinate reductase (267 aa).

NAD(+) is bound by residues 8–13, E34, 98–100, and 122–125; these read GAAGRM, GST, and APNM. Residue H155 is the Proton donor/acceptor of the active site. A (S)-2,3,4,5-tetrahydrodipicolinate-binding site is contributed by H156. The active-site Proton donor is the K159. 165–166 serves as a coordination point for (S)-2,3,4,5-tetrahydrodipicolinate; it reads GT.

This sequence belongs to the DapB family.

It is found in the cytoplasm. The enzyme catalyses (S)-2,3,4,5-tetrahydrodipicolinate + NAD(+) + H2O = (2S,4S)-4-hydroxy-2,3,4,5-tetrahydrodipicolinate + NADH + H(+). It carries out the reaction (S)-2,3,4,5-tetrahydrodipicolinate + NADP(+) + H2O = (2S,4S)-4-hydroxy-2,3,4,5-tetrahydrodipicolinate + NADPH + H(+). It functions in the pathway amino-acid biosynthesis; L-lysine biosynthesis via DAP pathway; (S)-tetrahydrodipicolinate from L-aspartate: step 4/4. In terms of biological role, catalyzes the conversion of 4-hydroxy-tetrahydrodipicolinate (HTPA) to tetrahydrodipicolinate. The sequence is that of 4-hydroxy-tetrahydrodipicolinate reductase from Syntrophotalea carbinolica (strain DSM 2380 / NBRC 103641 / GraBd1) (Pelobacter carbinolicus).